Reading from the N-terminus, the 440-residue chain is MCGVLRQLMLLLLAFLSITPSCSAWNFHHQLNGTTPSNGTTTNGSSSCPLANGASSNPLQVYTIAANNITASFIPYGARLISLMVPDREGKMQDVIVGYDNPQDYVKDTLTNHTYFGCIVGRYANRIRNGTFVLDGTTYNTPKNELNKTQTLHGGSVGYDQRNWTVTALSNSSITFTLFDSGYEHFPGDVINHVTFSVNSSYGLKRPNPQTEFTARTVSLSLTEKTPIMLSPHIYWNLNAFKNETVLEDTLLELPLSSRYVEVDSRLIPTGNIGNVSSSLNGTLDFTKGKLIGKDIKSADGICGANCTGYDNCFIIDRPNNASDWTSSPQTMVPAVNMSSITTGINMLVTTNQQAIQIYSCNGQNGTIPVKGSQVARNKASGDGNGTVVDKIEQYGCLVIETEGWIDGINNPDWGQDPFQIYSPESGPAINWATYVFTAS.

The signal sequence occupies residues Met-1 to Ala-24. Residues Asn-32, Asn-38, Asn-43, Asn-68, and Asn-112 are each glycosylated (N-linked (GlcNAc...) asparagine). A substrate-binding site is contributed by Asn-125–Arg-126. N-linked (GlcNAc...) asparagine glycans are attached at residues Asn-129, Asn-147, Asn-163, Asn-171, and Asn-199. The active-site Proton donor is the His-233. N-linked (GlcNAc...) asparagine glycosylation is found at Asn-243, Asn-275, Asn-281, and Asn-306. Asp-311 contacts substrate. 4 N-linked (GlcNAc...) asparagine glycosylation sites follow: Asn-321, Asn-337, Asn-365, and Asn-385. The Proton acceptor role is filled by Glu-401.

Belongs to the aldose epimerase family. As to quaternary structure, monomer.

It is found in the secreted. The catalysed reaction is alpha-D-glucose = beta-D-glucose. The protein operates within carbohydrate metabolism; hexose metabolism. Mutarotase converts alpha-aldose to the beta-anomer. It is active on D-glucose, L-arabinose, D-xylose, D-galactose, maltose and lactose. The polypeptide is Probable aldose 1-epimerase ARB_05372 (Arthroderma benhamiae (strain ATCC MYA-4681 / CBS 112371) (Trichophyton mentagrophytes)).